A 72-amino-acid polypeptide reads, in one-letter code: DNA-directed RNA polymerase subunit Rpo10 (72 aa).

Zn(2+) contacts are provided by cysteine 7, cysteine 10, cysteine 45, and cysteine 46.

Belongs to the archaeal Rpo10/eukaryotic RPB10 RNA polymerase subunit family. As to quaternary structure, part of the RNA polymerase complex. Zn(2+) serves as cofactor.

Its subcellular location is the cytoplasm. The catalysed reaction is RNA(n) + a ribonucleoside 5'-triphosphate = RNA(n+1) + diphosphate. DNA-dependent RNA polymerase (RNAP) catalyzes the transcription of DNA into RNA using the four ribonucleoside triphosphates as substrates. This is DNA-directed RNA polymerase subunit Rpo10 from Methanopyrus kandleri (strain AV19 / DSM 6324 / JCM 9639 / NBRC 100938).